Consider the following 666-residue polypeptide: Tripartite terminase subunit 3 (666 aa).

The Walker A motif motif lies at 208–215 (VPRRHGKT). The short motif at 300–305 (LLIVDE) is the Walker B motif element. The active-site For ATPase activity is glutamate 305. Active-site for nuclease activity residues include aspartate 458, glutamate 529, and aspartate 643.

It belongs to the herpesviridae TRM3 protein family. Interacts with the terminase subunits TRM1 and TRM2. Interacts with portal protein.

It localises to the host nucleus. Functionally, component of the molecular motor that translocates viral genomic DNA in empty capsid during DNA packaging. Forms a tripartite terminase complex together with TRM1 and TRM2 in the host cytoplasm. Once the complex reaches the host nucleus, it interacts with the capsid portal vertex. This portal forms a ring in which genomic DNA is translocated into the capsid. TRM3 carries an RNase H-like nuclease activity that plays an important role for the cleavage of concatemeric viral DNA into unit length genomes. The protein is Tripartite terminase subunit 3 of Homo sapiens (Human).